The chain runs to 369 residues: MKLKTLTLTHYRNYETAELNFSDEVNIFIGINAQGKTNLLEAIYCLAMAKSHRTSNDKELIGWGHEFSHIEGMLSYKHGTMPLSLSISKKGKKAKVNYLEQKRLTEYIGHMNVVLFAPEDLNLVKGSPQIRRRFIDMEIGQISAVYLNDLSNYQRLLKQKNHLLKQMKLSNSNDMTMLEVINEQFAQYAVKLTLRRKMFIEQLETLAIPIHTGITKDKERLSLRYNASLNYELAEQEMFEETIRILNANMGKEIERTQSLYGPHRDDLSFKINDIDVQTYGSQGQQRTTALSIKLAEIELINQEIGEYPILLLDDVLSELDDDRQTHLLTTIQHKVQTFVTTTSVEGIEHETINKAKLFNVSEGQISTN.

30–37 (GINAQGKT) is a binding site for ATP.

The protein belongs to the RecF family.

It is found in the cytoplasm. Its function is as follows. The RecF protein is involved in DNA metabolism; it is required for DNA replication and normal SOS inducibility. RecF binds preferentially to single-stranded, linear DNA. It also seems to bind ATP. In Macrococcus caseolyticus (strain JCSC5402) (Macrococcoides caseolyticum), this protein is DNA replication and repair protein RecF.